A 449-amino-acid chain; its full sequence is Protein adenylyltransferase FICD (449 aa).

Residues 15-35 (LLWGWGPILFGLLGSVFVLLL) form a helical membrane-spanning segment. TPR repeat units lie at residues 96–129 (AKAA…NPEF) and 130–163 (VEAL…SPCH). An Inhibitory (S/T)XXXE(G/N) motif motif is present at residues 220–225 (TVAIEG). Residues E224, 250–251 (EQ), 358–360 (GNG), and R364 each bind ATP. Residues 275-410 (ITVNDILEIH…VRPFIRFIAK (136 aa)) enclose the Fido domain.

The protein belongs to the fic family.

It is found in the membrane. It carries out the reaction L-tyrosyl-[protein] + ATP = O-(5'-adenylyl)-L-tyrosyl-[protein] + diphosphate. It catalyses the reaction L-threonyl-[protein] + ATP = 3-O-(5'-adenylyl)-L-threonyl-[protein] + diphosphate. Adenylyltransferase activity is inhibited by the inhibitory helix present at the N-terminus: Glu-224 binds ATP and competes with ATP-binding at Arg-364, thereby preventing adenylyltransferase activity. Activation dissociates ATP-binding from Glu-224, allowing ordered binding of the entire ATP moiety with the alpha-phosphate in an orientation that is productive for accepting an incoming target hydroxyl side chain. Its function is as follows. Adenylyltransferase that mediates the addition of adenosine 5'-monophosphate (AMP) to specific residues of target proteins. The sequence is that of Protein adenylyltransferase FICD (ficd) from Danio rerio (Zebrafish).